The chain runs to 119 residues: UPF0102 protein Sare_1228 (119 aa).

Belongs to the UPF0102 family.

This chain is UPF0102 protein Sare_1228, found in Salinispora arenicola (strain CNS-205).